The following is a 414-amino-acid chain: uncharacterized protein (414 aa).

Disordered stretches follow at residues 136-168 (SSKS…TVPT), 298-322 (KNFP…SYHR), and 350-382 (PPHS…MSTS).

This is an uncharacterized protein from Macaca fascicularis (Crab-eating macaque).